We begin with the raw amino-acid sequence, 31 residues long: Cytochrome b6-f complex subunit 6 (31 aa).

A helical transmembrane segment spans residues 4–24 (ITSYFGFLLAVLTITSALFIG).

This sequence belongs to the PetL family. The 4 large subunits of the cytochrome b6-f complex are cytochrome b6, subunit IV (17 kDa polypeptide, PetD), cytochrome f and the Rieske protein, while the 4 small subunits are PetG, PetL, PetM and PetN. The complex functions as a dimer.

It is found in the plastid. Its subcellular location is the chloroplast thylakoid membrane. Its function is as follows. Component of the cytochrome b6-f complex, which mediates electron transfer between photosystem II (PSII) and photosystem I (PSI), cyclic electron flow around PSI, and state transitions. PetL is important for photoautotrophic growth as well as for electron transfer efficiency and stability of the cytochrome b6-f complex. The polypeptide is Cytochrome b6-f complex subunit 6 (Cucumis sativus (Cucumber)).